The primary structure comprises 5099 residues: Malformin synthetase mlfA (5099 aa).

Residues 224–615 are adenylation 1; sequence QRHAADRPHS…CGRADTQVKL (392 aa). Positions 756–829 constitute a Carrier 1 domain; that stretch reads THLENEIQLA…EAASLAKVRD (74 aa). Serine 790 is modified (O-(pantetheine 4'-phosphoryl)serine). The segment at 867–1297 is condensation 1; sequence EDVFPCTSMQ…PVDSLTLLKP (431 aa). The interval 1325–1717 is adenylation 2; that stretch reads DRWVNRQPDT…GRKDTQVKLR (393 aa). The Carrier 2 domain occupies 1857 to 1934; that stretch reads ARAPELERTL…QIATQCEGIA (78 aa). Serine 1894 bears the O-(pantetheine 4'-phosphoryl)serine mark. Residues 1995–2040 form a disordered region; sequence MQQESSSSPAPSVSSSSSSSSAPKPLLAQPEPPTNLRDSVPEPFSL. Low complexity predominate over residues 1999-2017; sequence SSSSPAPSVSSSSSSSSAP. Positions 2067–2482 are condensation 2; it reads EDIYPATPLQ…ALSPGDKKVL (416 aa). Residues 2505-2897 are adenylation 3; it reads LSTPHAPAVC…VGRKDGQLKL (393 aa). The Carrier 3 domain occupies 3032–3108; that stretch reads RPATAQERGL…RLVLHLQNTS (77 aa). An O-(pantetheine 4'-phosphoryl)serine modification is found at serine 3069. Condensation stretches follow at residues 3125–3589 and 3610–4033; these read WVHL…TYDQ and DIYP…QQAM. Residues 4058–4446 form an adenylation 4 region; that stretch reads YANREAVCAW…VGRKDSQIKF (389 aa). One can recognise a Carrier 4 domain in the interval 4581–4657; it reads PPSTGMQQGI…DLAEHISSRV (77 aa). Serine 4618 is modified (O-(pantetheine 4'-phosphoryl)serine). The tract at residues 4696-5017 is condensation 5; sequence DILPTTGFQR…LQTVVQHQNV (322 aa).

Belongs to the NRP synthetase family.

It participates in secondary metabolite biosynthesis. Nonribosomal peptide synthetase; part of the gene cluster that mediates the biosynthesis of malformins, cyclic pentapeptides with a disulfide bond between 2 consecutive cysteins, that show potential anti-tumor as well as antimalarial and antitrypanosomal properties. The nonribosomal peptide synthetase mlfA is responsible of the formation of the cyclic pentapeptide. The malformin biosynthesis clusters in malformin-producing fungi also contain enzymes involved in the formation of the disulfide bond between the two consecutive cysteins within malformins, in addition to additional tailoring enzymes such as methyltransferases or oxidoreductases. They are also composed of up to 4 major facilitator superfamily transporters, and transcription factors probably involved in the regulation of the expression of those clusters. The sequence is that of Malformin synthetase mlfA from Aspergillus sclerotiicarbonarius (strain CBS 121057 / IBT 28362).